Here is a 198-residue protein sequence, read N- to C-terminus: Glycerol-3-phosphate acyltransferase (198 aa).

The next 5 membrane-spanning stretches (helical) occupy residues 1–21, 52–72, 81–101, 115–135, and 153–173; these read MILITSLAVLVSYLIGSIPAA, GPALLVAAFDILKGAIAVGLA, WTALCGVAAVLGHNFSPFLGF, LALDPVVGGGAFVVGVGCIWL, and LAAALARPGWLLLIVAFLAAL.

This sequence belongs to the PlsY family. In terms of assembly, probably interacts with PlsX.

Its subcellular location is the cell membrane. The catalysed reaction is an acyl phosphate + sn-glycerol 3-phosphate = a 1-acyl-sn-glycero-3-phosphate + phosphate. It participates in lipid metabolism; phospholipid metabolism. Catalyzes the transfer of an acyl group from acyl-phosphate (acyl-PO(4)) to glycerol-3-phosphate (G3P) to form lysophosphatidic acid (LPA). This enzyme utilizes acyl-phosphate as fatty acyl donor, but not acyl-CoA or acyl-ACP. This Deinococcus geothermalis (strain DSM 11300 / CIP 105573 / AG-3a) protein is Glycerol-3-phosphate acyltransferase.